Reading from the N-terminus, the 88-residue chain is Large ribosomal subunit protein eL37 (88 aa).

Residues cysteine 17, cysteine 20, cysteine 32, and cysteine 35 each contribute to the Zn(2+) site. The segment at 17-35 (CNRCGRRSFHVQKKTCSSC) adopts a C4-type zinc-finger fold.

This sequence belongs to the eukaryotic ribosomal protein eL37 family. It depends on Zn(2+) as a cofactor.

Binds to the 23S rRNA. This is Large ribosomal subunit protein eL37 (RPL37) from Candida albicans (Yeast).